The following is an 89-amino-acid chain: Small ribosomal subunit protein uS15 (89 aa).

Belongs to the universal ribosomal protein uS15 family. Part of the 30S ribosomal subunit. Forms a bridge to the 50S subunit in the 70S ribosome, contacting the 23S rRNA.

In terms of biological role, one of the primary rRNA binding proteins, it binds directly to 16S rRNA where it helps nucleate assembly of the platform of the 30S subunit by binding and bridging several RNA helices of the 16S rRNA. Functionally, forms an intersubunit bridge (bridge B4) with the 23S rRNA of the 50S subunit in the ribosome. This chain is Small ribosomal subunit protein uS15, found in Saccharopolyspora erythraea (strain ATCC 11635 / DSM 40517 / JCM 4748 / NBRC 13426 / NCIMB 8594 / NRRL 2338).